Reading from the N-terminus, the 127-residue chain is Probable 4-amino-4-deoxy-L-arabinose-phosphoundecaprenol flippase subunit ArnF (127 aa).

The helical transmembrane segment at 1–21 (MMGYFWALMSVLLVSGAQLMM) threads the bilayer. The Periplasmic portion of the chain corresponds to 22 to 48 (KWAMVSLPPVGQTDALMSAFMSVTPGA). Residues 49 to 69 (VALVIGLFAYVFSMGCWYMAL) form a helical membrane-spanning segment. Over 70-77 (RRIALSKA) the chain is Cytoplasmic. The chain crosses the membrane as a helical span at residues 78–98 (YPLLSLSYVLVWAAAIGLPWL). Over 99–101 (HEP) the chain is Periplasmic. A helical membrane pass occupies residues 102–122 (FSVGKLAGVSVIFVGLLLVCL). The Cytoplasmic portion of the chain corresponds to 123–127 (PDKKS).

The protein belongs to the ArnF family. As to quaternary structure, heterodimer of ArnE and ArnF.

It is found in the cell inner membrane. Its pathway is bacterial outer membrane biogenesis; lipopolysaccharide biosynthesis. Translocates 4-amino-4-deoxy-L-arabinose-phosphoundecaprenol (alpha-L-Ara4N-phosphoundecaprenol) from the cytoplasmic to the periplasmic side of the inner membrane. In Enterobacter sp. (strain 638), this protein is Probable 4-amino-4-deoxy-L-arabinose-phosphoundecaprenol flippase subunit ArnF.